Here is a 232-residue protein sequence, read N- to C-terminus: Platelet-activating factor acetylhydrolase IB subunit alpha1 (232 aa).

The tract at residues 1–20 is disordered; that stretch reads MSGEGENPASKPTPVQDVQG. The residue at position 2 (Ser2) is an N-acetylserine. A Phosphoserine modification is found at Ser2. Active-site residues include Ser48, Asp193, and His196.

This sequence belongs to the 'GDSL' lipolytic enzyme family. Platelet-activating factor acetylhydrolase IB beta/gamma subunits subfamily. In terms of assembly, forms a catalytic dimer which is either homodimer (alpha1/alpha1 homodimer) or heterodimer with PAFAH1B2 (alpha1/alpha2 heterodimer). Component of the cytosolic (PAF-AH (I)) heterotetrameric enzyme, which is composed of PAFAH1B1 (beta), PAFAH1B2 (alpha2) and PAFAH1B3 (alpha1) subunits. The catalytic activity of the enzyme resides in the alpha1 (PAFAH1B3) and alpha2 (PAFAH1B2) subunits, whereas the beta subunit (PAFAH1B1) has regulatory activity. Trimer formation is not essential for the catalytic activity. Interacts with VLDLR; this interaction may modulate the Reelin pathway. Expressed in brain, spleen, lung, liver, kidney and testis. Not expressed in heart and skeletal muscle. Expressed in fetal brain as heterodimer. Not expressed in adult tissues. Expressed exclusively in granule cells.

Its subcellular location is the cytoplasm. It catalyses the reaction a 1-O-alkyl-2-acetyl-sn-glycero-3-phosphocholine + H2O = a 1-O-alkyl-sn-glycero-3-phosphocholine + acetate + H(+). The catalysed reaction is 1-O-hexadecyl-2-acetyl-sn-glycero-3-phosphocholine + H2O = 1-O-hexadecyl-sn-glycero-3-phosphocholine + acetate + H(+). The enzyme catalyses 1-O-hexadecyl-2-acetyl-sn-glycero-3-phosphate + H2O = 1-O-hexadecyl-sn-glycero-3-phosphate + acetate + H(+). Beta subunit (PAFAH1B1) inhibits the acetylhydrolase activity of the alpha1/alpha1 catalytic homodimer. Its function is as follows. Alpha1 catalytic subunit of the cytosolic type I platelet-activating factor (PAF) acetylhydrolase (PAF-AH (I)) heterotetrameric enzyme that catalyzes the hydrolyze of the acetyl group at the sn-2 position of PAF and its analogs and modulates the action of PAF. The activity and substrate specificity of PAF-AH (I) are affected by its subunit composition. Both alpha1/alpha1 homodimer (PAFAH1B3/PAFAH1B3 homodimer) and alpha1/alpha2 heterodimer(PAFAH1B3/PAFAH1B2 heterodimer) hydrolyze 1-O-alkyl-2-acetyl-sn-glycero-3-phosphoric acid (AAGPA) more efficiently than PAF, but they have little hydrolytic activity towards 1-O-alkyl-2-acetyl-sn-glycero-3-phosphorylethanolamine (AAGPE). Plays an important role during the development of brain. This is Platelet-activating factor acetylhydrolase IB subunit alpha1 from Rattus norvegicus (Rat).